Consider the following 400-residue polypeptide: ELAV-like protein 4 (400 aa).

The tract at residues 12-48 (TMEPQVSNGPTSNTSNGPSSNSRNCPSPMQTGAATDD) is disordered. Residues 18-33 (SNGPTSNTSNGPSSNS) show a composition bias toward low complexity. The segment covering 34–44 (RNCPSPMQTGA) has biased composition (polar residues). RRM domains follow at residues 51–158 (TNLI…YARP), 166–246 (ANLY…FANN), and 317–395 (WCIF…FKTN).

It belongs to the RRM elav family.

Its subcellular location is the cytoplasm. It is found in the perikaryon. It localises to the cell projection. The protein resides in the axon. The protein localises to the dendrite. Its subcellular location is the growth cone. Its function is as follows. RNA-binding protein that is involved in the post-transcriptional regulation of mRNAs. Plays a role in the regulation of mRNA stability, alternative splicing and translation. Binds to AU-rich element (ARE) sequences in the 3' untranslated region (3'UTR) of target mRNAs. Mainly plays a role in neuron-specific RNA processing. This is ELAV-like protein 4 (elavl4) from Xenopus tropicalis (Western clawed frog).